Consider the following 341-residue polypeptide: GTPase Obg (341 aa).

Positions 1–159 (MKFLDQAKVY…RAIWLRLKLI (159 aa)) constitute an Obg domain. Positions 160-327 (ADAGLVGLPN…VLRAGAHIIE (168 aa)) constitute an OBG-type G domain. Residues 166 to 173 (GLPNAGKS), 191 to 195 (FTTLH), 212 to 215 (DIPG), 279 to 282 (SQID), and 308 to 310 (SAV) contribute to the GTP site. 2 residues coordinate Mg(2+): serine 173 and threonine 193.

This sequence belongs to the TRAFAC class OBG-HflX-like GTPase superfamily. OBG GTPase family. As to quaternary structure, monomer. Mg(2+) is required as a cofactor.

Its subcellular location is the cytoplasm. An essential GTPase which binds GTP, GDP and possibly (p)ppGpp with moderate affinity, with high nucleotide exchange rates and a fairly low GTP hydrolysis rate. Plays a role in control of the cell cycle, stress response, ribosome biogenesis and in those bacteria that undergo differentiation, in morphogenesis control. In Bartonella tribocorum (strain CIP 105476 / IBS 506), this protein is GTPase Obg.